Here is a 484-residue protein sequence, read N- to C-terminus: Monocarboxylate transporter 2 (484 aa).

The Cytoplasmic segment spans residues 1 to 16 (MPSEPSAPLPQPLPPD). A helical transmembrane segment spans residues 17-37 (GGWGWVVVCASFISIGFSYAF). Topologically, residues 38-60 (PKAVTVFFKDIQEIFNTTSSQIA) are extracellular. Residues 61-81 (WISSIMLAVMYAGGPISSVLV) form a helical membrane-spanning segment. Over 82–90 (NNYGSRPVV) the chain is Cytoplasmic. A helical transmembrane segment spans residues 91–111 (IVGGLLCCIGMILASYSNSVI). The Extracellular portion of the chain corresponds to 112–116 (ELYLT). Residues 117-137 (VGFIGGLGLAFNLQPALTIIG) traverse the membrane as a helical segment. At 138-149 (KYFYRRRPLANG) the chain is on the cytoplasmic side. The helical transmembrane segment at 150 to 170 (CAMAGSPVFLSTLAPFNQYLF) threads the bilayer. Topologically, residues 171–174 (NNYG) are extracellular. A helical transmembrane segment spans residues 175-195 (WKGSFLILGGIFLHSCVAGCL). At 196–245 (MRPVGPSPNTKKSKSKVGSRHDSTLKKASKVSTAQKVNRFLDFSLFMHRG) the chain is on the cytoplasmic side. The helical transmembrane segment at 246–266 (FLIYLSGNVILFLGIFAPIIF) threads the bilayer. Over 267 to 281 (LAQYAKHIGVDDYNS) the chain is Extracellular. A helical membrane pass occupies residues 282 to 302 (AFLLSVMAFIDMFARPSVGLI). Over 303 to 311 (ANTSLIRPR) the chain is Cytoplasmic. Residues 312-332 (IQYLFSSAIIFTGICHLLCPL) traverse the membrane as a helical segment. The Extracellular portion of the chain corresponds to 333–337 (ATTYS). A helical membrane pass occupies residues 338 to 358 (ALVVYVVFFGLGFGSISSLLF). Residues 359 to 372 (ECLMDIVGATRFSS) are Cytoplasmic-facing. The chain crosses the membrane as a helical span at residues 373 to 393 (AVGLTTIVECCPVLFGPPLAG). Residues 394-405 (KLLDITGEYKYL) lie on the Extracellular side of the membrane. The helical transmembrane segment at 406 to 426 (YIASGTVVLVSGTYLLIGNAI) threads the bilayer. Residues 427 to 484 (NYRLLDKERKREKAKKKKSASHASREMEALNRSKQDEVTVKASNAHNPPSDRDKESNI) are Cytoplasmic-facing. Positions 438-484 (EKAKKKKSASHASREMEALNRSKQDEVTVKASNAHNPPSDRDKESNI) are disordered. Composition is skewed to basic and acidic residues over residues 449–465 (ASREMEALNRSKQDEVT) and 475–484 (PSDRDKESNI).

Belongs to the major facilitator superfamily. Monocarboxylate porter (TC 2.A.1.13) family. As to quaternary structure, homodimer. Interacts with GRID2IP. Interacts with EMB; interaction mediates SLC16A7 targeting to the plasma membrane. Interacts with isoform 2 of BSG. Detected in testis and in spermatozoa (at protein level).

It is found in the cell membrane. Its subcellular location is the cytoplasm. The protein localises to the basolateral cell membrane. It carries out the reaction (S)-lactate(in) + H(+)(in) = (S)-lactate(out) + H(+)(out). It catalyses the reaction 3-methyl-2-oxobutanoate(out) + H(+)(out) = 3-methyl-2-oxobutanoate(in) + H(+)(in). The catalysed reaction is acetoacetate(out) + H(+)(out) = acetoacetate(in) + H(+)(in). The enzyme catalyses (R)-3-hydroxybutanoate(out) + H(+)(out) = (R)-3-hydroxybutanoate(in) + H(+)(in). It carries out the reaction 4-methyl-2-oxopentanoate(out) + H(+)(out) = 4-methyl-2-oxopentanoate(in) + H(+)(in). It catalyses the reaction pyruvate(out) + H(+)(out) = pyruvate(in) + H(+)(in). The catalysed reaction is (S)-3-hydroxybutanoate(out) + H(+)(out) = (S)-3-hydroxybutanoate(in) + H(+)(in). Transport activity exhibits steep dependence on substrate concentration. Substrate concentration sensitivity of SLC16A7 arises from the strong inter-subunit cooperativity of the SLC16A7 dimer during transport. Inhibited by AR-C155858. In terms of biological role, proton-coupled monocarboxylate symporter. Catalyzes the rapid transport across the plasma membrane of monocarboxylates such as L-lactate, pyruvate and ketone bodies, acetoacetate, beta-hydroxybutyrate and acetate. Dimerization is functionally required and both subunits work cooperatively in transporting substrate. This is Monocarboxylate transporter 2 (Slc16a7) from Mus musculus (Mouse).